We begin with the raw amino-acid sequence, 27 residues long: Toxin TdII-4 (27 aa).

Residues 1 to 27 form the LCN-type CS-alpha/beta domain; the sequence is KDGYLMEPNGCKLGCLTRPAKYCWXEE.

The protein belongs to the long (4 C-C) scorpion toxin superfamily. Sodium channel inhibitor family. Beta subfamily. As to expression, expressed by the venom gland.

The protein localises to the secreted. In terms of biological role, beta toxins bind voltage-independently at site-4 of sodium channels (Nav) and shift the voltage of activation toward more negative potentials thereby affecting sodium channel activation and promoting spontaneous and repetitive firing. This toxin is active against mammals and also affects neuromuscular preparations of frog. The sequence is that of Toxin TdII-4 from Tityus discrepans (Venezuelan scorpion).